Consider the following 535-residue polypeptide: Importin subunit alpha-2 (535 aa).

Positions 1 to 58 (MSLRPNAKTEVRRNRYKVAVDAEEGRRRREDNMVEIRKSKREESLQKKRREGLQANQL) constitute an IBB domain. The span at 20 to 46 (VDAEEGRRRREDNMVEIRKSKREESLQ) shows a compositional bias: basic and acidic residues. The interval 20 to 67 (VDAEEGRRRREDNMVEIRKSKREESLQKKRREGLQANQLPQFAPSPVP) is disordered. 10 ARM repeats span residues 67–106 (PASS…KLLS), 110–150 (SPPI…NIAS), 153–192 (SENT…NVAG), 195–235 (PRCR…NFCR), 237–276 (KPQP…YLSD), 279–318 (NDKI…NIVT), 321–361 (DLQT…NITA), 364–403 (RDQI…NATS), 407–446 (PDQI…NILK), and 461–500 (NFYA…TYWL).

This sequence belongs to the importin alpha family. In terms of assembly, forms a complex with the importin subunit beta-1 KPNB1. Interacts with A.tumefaciens VirD2 and VirE2. Binds to SWO1.

The protein localises to the nucleus envelope. Binds to conventional NLS motifs and mediates nuclear protein import across the nuclear envelope. Involved in the maintenance of cell wall integrity under salt stress via interaction with SWO1. Acts as a cellular receptor for the nuclear import of the virD2 protein of Agrobacterium, but is not essential for Agrobacterium-mediated root transformation. In Arabidopsis thaliana (Mouse-ear cress), this protein is Importin subunit alpha-2.